The sequence spans 770 residues: Disabled homolog 2 (770 aa).

Residues 1–16 (MSNEVETSATNGQPDQ) are compositionally biased toward polar residues. Residues 1 to 38 (MSNEVETSATNGQPDQQAAPKAPSKKEKKKGPEKTDEY) form a disordered region. Ser2 is subject to N-acetylserine. Ser2 is subject to Phosphoserine. The PID domain occupies 45-196 (GDGVKYKAKL…KAVENGSEAL (152 aa)). Phosphotyrosine is present on Tyr170. A Phosphoserine modification is found at Ser193. A required for localization to clathrin-coated pits region spans residues 230–447 (ESKDILLVDL…KPGRGRRTAK (218 aa)). 2 disordered regions span residues 284–482 (LNFF…LQPN) and 604–629 (VSTQPPSMHSSLLVTPPQPPPRAGPP). Short sequence motifs (DPF) lie at residues 293–295 (DPF) and 298–300 (DPF). Residues 302–313 (QPDQSTPSSFDS) are compositionally biased toward polar residues. Phosphoserine; in mitosis occurs at positions 326 and 328. Over residues 366-396 (FSSSQTQPAVRTQNGVSEREQNGFSVKSSPN) the composition is skewed to polar residues. Ser401 carries the post-translational modification Phosphoserine. Composition is skewed to polar residues over residues 407 to 425 (SIQNGVKQDLESSVQSSPH), 466 to 480 (PSGQASPTGQPTALQ), and 604 to 616 (VSTQPPSMHSSLL). Positions 604 to 732 (VSTQPPSMHS…SLPVTKSTDN (129 aa)) are sufficient for interaction with GRB2. The tract at residues 619–627 (PPQPPPRAG) is required for interaction with CSK. Residues 649–770 (KDVKEMFKDF…YRDPFGNPFA (122 aa)) are required for interaction with MYO6. The tract at residues 663–671 (PPAVPARKG) is required for interaction with GRB2 and CSK. 3 positions are modified to phosphoserine: Ser675, Ser723, and Ser729. Positions 709-725 (NKINEPPKPAPRQVSLP) are sufficient for interaction with SH3KBP1 SH3 domain. The segment at 742–770 (SFGSSQASVASSQPVSSEMYRDPFGNPFA) is disordered. Residues 745–758 (SSQASVASSQPVSS) are compositionally biased toward low complexity.

As to quaternary structure, interacts (via NPXY motif) with DAB2 (via PID domain). Can interact (via PID domain) with LDLR, APP, APLP1 and APLP2, and weakly with INPP5D (via NPXY motifs); the interaction is impaired by tyrosine phosphorylation of the respective NPXY motifs. Can weakly interact (via PID domain) with LRP1 (via NPXY motif); the interaction is enhanced by tyrosine phosphorylation of the NPXY motif. Interacts with LRP2 (via NPXY motif); the interaction is not affected by tyrosine phosphorylation of the NPXY motif. Interacts with clathrin; in vitro can assemble clathrin triskelia into polyhedral coats. Interacts with AP2A2, ITGB1, ITGB3, ITGB5, PIAS2, DAB2IP, NOSTRIN, FCHO1, DVL3, EPS15, ITSN1 and EPS15L1. Interacts with SH3KBP1 (via SH3 domains). Interacts with GRB2; competes with SOS1 for binding to GRB2 and the interaction is enhanced by EGF and NT-3 stimulation. Interacts with MAP3K7; the interaction is induced by TGF-beta stimulation and may mediate TGF-beta stimulated JNK activation. Interacts with AXIN1 and PPP1CA; the interactions are mutually exclusive. Interacts with the globular tail of MYO6. Interacts (via DPF motifs) with FCHO2; the interaction is direct and required for DAB2-mediated LDLR endocytosis. Interacts with LRP6; the interaction involves LRP6 phosphorylation by CK2 and sequesters LRP6 towards clathrin-mediated endocytosis. Associates with the TGF-beta receptor complex. Interacts with SMAD2 and SMAD3; the interactions are enhanced upon TGF-beta stimulation. Interacts with GRB2; the interaction is enhanced by EGF and NT-3 stimulation. Interacts with SRC; the interaction is enhanced by EGF stimulation. Post-translationally, phosphorylated. Phosphorylation during mitosis is leading to membrane displacement. In terms of tissue distribution, expressed in deep invaginations, inclusion cysts and the surface epithelial cells of the ovary. Also expressed in breast epithelial cells, spleen, thymus, prostate, testis, macrophages, fibroblasts, lung epithelial cells, placenta, brain stem, heart and small intestine. Expressed in kidney proximal tubular epithelial cells (at protein level).

It is found in the cytoplasm. The protein localises to the cytoplasmic vesicle. The protein resides in the clathrin-coated vesicle membrane. It localises to the membrane. Its subcellular location is the clathrin-coated pit. Functionally, adapter protein that functions as a clathrin-associated sorting protein (CLASP) required for clathrin-mediated endocytosis of selected cargo proteins. Can bind and assemble clathrin, and binds simultaneously to phosphatidylinositol 4,5-bisphosphate (PtdIns(4,5)P2) and cargos containing non-phosphorylated NPXY internalization motifs, such as the LDL receptor, to recruit them to clathrin-coated pits. Can function in clathrin-mediated endocytosis independently of the AP-2 complex. Involved in endocytosis of integrin beta-1; this function seems to redundant with the AP-2 complex and seems to require DAB2 binding to endocytosis accessory EH domain-containing proteins such as EPS15, EPS15L1 and ITSN1. Involved in endocytosis of cystic fibrosis transmembrane conductance regulator/CFTR. Involved in endocytosis of megalin/LRP2 lipoprotein receptor during embryonal development. Required for recycling of the TGF-beta receptor. Involved in CFTR trafficking to the late endosome. Involved in several receptor-mediated signaling pathways. Involved in TGF-beta receptor signaling and facilitates phosphorylation of the signal transducer SMAD2. Mediates TFG-beta-stimulated JNK activation. May inhibit the canoniocal Wnt/beta-catenin signaling pathway by stabilizing the beta-catenin destruction complex through a competing association with axin preventing its dephosphorylation through protein phosphatase 1 (PP1). Sequesters LRP6 towards clathrin-mediated endocytosis, leading to inhibition of Wnt/beta-catenin signaling. May activate non-canonical Wnt signaling. In cell surface growth factor/Ras signaling pathways proposed to inhibit ERK activation by interrupting the binding of GRB2 to SOS1 and to inhibit SRC by preventing its activating phosphorylation at 'Tyr-419'. Proposed to be involved in modulation of androgen receptor (AR) signaling mediated by SRC activation; seems to compete with AR for interaction with SRC. Plays a role in the CSF-1 signal transduction pathway. Plays a role in cellular differentiation. Involved in cell positioning and formation of visceral endoderm (VE) during embryogenesis and proposed to be required in the VE to respond to Nodal signaling coming from the epiblast. Required for the epithelial to mesenchymal transition, a process necessary for proper embryonic development. May be involved in myeloid cell differentiation and can induce macrophage adhesion and spreading. May act as a tumor suppressor. The polypeptide is Disabled homolog 2 (DAB2) (Homo sapiens (Human)).